A 439-amino-acid chain; its full sequence is tRNA modification GTPase MnmE (439 aa).

(6S)-5-formyl-5,6,7,8-tetrahydrofolate-binding residues include R20, E78, and K116. The TrmE-type G domain occupies 211-364 (GIYVAILGEP…LLSAIQKKVE (154 aa)). GTP is bound by residues 221–226 (NSGKST), 240–246 (SEYAGTT), and 265–268 (DTAG). Mg(2+) is bound by residues S225 and T246. K439 contributes to the (6S)-5-formyl-5,6,7,8-tetrahydrofolate binding site.

The protein belongs to the TRAFAC class TrmE-Era-EngA-EngB-Septin-like GTPase superfamily. TrmE GTPase family. In terms of assembly, homodimer. Heterotetramer of two MnmE and two MnmG subunits. The cofactor is K(+).

Its subcellular location is the cytoplasm. Exhibits a very high intrinsic GTPase hydrolysis rate. Involved in the addition of a carboxymethylaminomethyl (cmnm) group at the wobble position (U34) of certain tRNAs, forming tRNA-cmnm(5)s(2)U34. This is tRNA modification GTPase MnmE from Ehrlichia ruminantium (strain Gardel).